The following is a 408-amino-acid chain: Imidazolonepropionase (408 aa).

Residues histidine 73 and histidine 75 each coordinate Fe(3+). Zn(2+) is bound by residues histidine 73 and histidine 75. Positions 82, 145, and 178 each coordinate 4-imidazolone-5-propanoate. Tyrosine 145 provides a ligand contact to N-formimidoyl-L-glutamate. A Fe(3+)-binding site is contributed by histidine 243. Histidine 243 is a Zn(2+) binding site. Residue glutamine 246 participates in 4-imidazolone-5-propanoate binding. Aspartate 318 contacts Fe(3+). A Zn(2+)-binding site is contributed by aspartate 318. 2 residues coordinate N-formimidoyl-L-glutamate: asparagine 320 and glycine 322. 4-imidazolone-5-propanoate is bound at residue serine 323.

It belongs to the metallo-dependent hydrolases superfamily. HutI family. Zn(2+) serves as cofactor. Requires Fe(3+) as cofactor.

The protein localises to the cytoplasm. It catalyses the reaction 4-imidazolone-5-propanoate + H2O = N-formimidoyl-L-glutamate. Its pathway is amino-acid degradation; L-histidine degradation into L-glutamate; N-formimidoyl-L-glutamate from L-histidine: step 3/3. In terms of biological role, catalyzes the hydrolytic cleavage of the carbon-nitrogen bond in imidazolone-5-propanoate to yield N-formimidoyl-L-glutamate. It is the third step in the universal histidine degradation pathway. This Shewanella baltica (strain OS155 / ATCC BAA-1091) protein is Imidazolonepropionase.